The chain runs to 45 residues: MKVSSSIKADPSKGDKLVRRKGRLYVINKKDPNRKQRQAGPARKK.

A disordered region spans residues 1 to 45 (MKVSSSIKADPSKGDKLVRRKGRLYVINKKDPNRKQRQAGPARKK).

Belongs to the bacterial ribosomal protein bL36 family.

This Chlamydia caviae (strain ATCC VR-813 / DSM 19441 / 03DC25 / GPIC) (Chlamydophila caviae) protein is Large ribosomal subunit protein bL36.